The sequence spans 65 residues: Large ribosomal subunit protein bL35 (65 aa).

The protein belongs to the bacterial ribosomal protein bL35 family.

The polypeptide is Large ribosomal subunit protein bL35 (Ruminiclostridium cellulolyticum (strain ATCC 35319 / DSM 5812 / JCM 6584 / H10) (Clostridium cellulolyticum)).